The chain runs to 402 residues: 1-deoxy-D-xylulose 5-phosphate reductoisomerase (402 aa).

7 residues coordinate NADPH: Thr21, Gly22, Ser23, Ile24, Gly47, Asn50, and Asn127. Position 128 (Lys128) interacts with 1-deoxy-D-xylulose 5-phosphate. Residue Glu129 coordinates NADPH. Asp151 lines the Mn(2+) pocket. 4 residues coordinate 1-deoxy-D-xylulose 5-phosphate: Ser152, Glu153, Ser177, and His200. Position 153 (Glu153) interacts with Mn(2+). An NADPH-binding site is contributed by Gly206. 1-deoxy-D-xylulose 5-phosphate-binding residues include Ser213, Asn218, Lys219, and Glu222. Residue Glu222 coordinates Mn(2+).

Belongs to the DXR family. Mg(2+) serves as cofactor. The cofactor is Mn(2+).

The catalysed reaction is 2-C-methyl-D-erythritol 4-phosphate + NADP(+) = 1-deoxy-D-xylulose 5-phosphate + NADPH + H(+). It participates in isoprenoid biosynthesis; isopentenyl diphosphate biosynthesis via DXP pathway; isopentenyl diphosphate from 1-deoxy-D-xylulose 5-phosphate: step 1/6. Catalyzes the NADPH-dependent rearrangement and reduction of 1-deoxy-D-xylulose-5-phosphate (DXP) to 2-C-methyl-D-erythritol 4-phosphate (MEP). This chain is 1-deoxy-D-xylulose 5-phosphate reductoisomerase, found in Mycobacterium ulcerans (strain Agy99).